We begin with the raw amino-acid sequence, 82 residues long: Large ribosomal subunit protein bL31B-2 (82 aa).

This sequence belongs to the bacterial ribosomal protein bL31 family. Type B subfamily. Part of the 50S ribosomal subunit.

The sequence is that of Large ribosomal subunit protein bL31B-2 from Streptomyces avermitilis (strain ATCC 31267 / DSM 46492 / JCM 5070 / NBRC 14893 / NCIMB 12804 / NRRL 8165 / MA-4680).